We begin with the raw amino-acid sequence, 997 residues long: Disease resistance protein RML1A (997 aa).

The TIR domain maps to 12–176; the sequence is WRYRVFTSFH…KIARDVSEKL (165 aa). Glu-87 is an active-site residue. The NB-ARC domain occupies 191–447; the sequence is EAHLRKIQSL…HIAIFFNYED (257 aa). LRR repeat units lie at residues 194 to 218, 534 to 557, 600 to 623, 624 to 647, 649 to 670, 671 to 693, 694 to 714, 715 to 737, 758 to 781, and 783 to 808; these read LRKI…GPAG, TSGI…RFLS, AENL…TQLL, TKLK…SNAT, LEML…IKNL, HKLD…NINL, ASLE…PAFS, TKIK…ITHC, PSSL…CIKD, and QRLD…SLRL.

The enzyme catalyses NAD(+) + H2O = ADP-D-ribose + nicotinamide + H(+). Its function is as follows. TIR-NB-LRR receptor-like protein that confers resistance to the pathogen Leptosphaeria maculans (blackleg disease). The chain is Disease resistance protein RML1A from Arabidopsis thaliana (Mouse-ear cress).